Reading from the N-terminus, the 683-residue chain is DNA ligase (683 aa).

Residues D35–D39, S84–L85, and E116 each bind NAD(+). K118 acts as the N6-AMP-lysine intermediate in catalysis. Positions 139, 176, 293, and 317 each coordinate NAD(+). Positions 419, 422, 437, and 443 each coordinate Zn(2+). In terms of domain architecture, BRCT spans A602 to E683.

It belongs to the NAD-dependent DNA ligase family. LigA subfamily. Mg(2+) is required as a cofactor. Requires Mn(2+) as cofactor.

The enzyme catalyses NAD(+) + (deoxyribonucleotide)n-3'-hydroxyl + 5'-phospho-(deoxyribonucleotide)m = (deoxyribonucleotide)n+m + AMP + beta-nicotinamide D-nucleotide.. Its function is as follows. DNA ligase that catalyzes the formation of phosphodiester linkages between 5'-phosphoryl and 3'-hydroxyl groups in double-stranded DNA using NAD as a coenzyme and as the energy source for the reaction. It is essential for DNA replication and repair of damaged DNA. In Dechloromonas aromatica (strain RCB), this protein is DNA ligase.